A 432-amino-acid chain; its full sequence is uncharacterized protein (432 aa).

A compositionally biased stretch (polar residues) spans 1 to 14 (MSDTTDVPENQKSP). A disordered region spans residues 1–42 (MSDTTDVPENQKSPKPSGKADKRKIEEKPENSSLKRKKFEDP). The segment covering 18–30 (GKADKRKIEEKPE) has biased composition (basic and acidic residues). One can recognise an S4 RNA-binding domain in the interval 85 to 148 (RKMVEVFSGE…HEHPIRDLPI (64 aa)). Aspartate 199 is an active-site residue.

This sequence belongs to the pseudouridine synthase RluA family.

This is an uncharacterized protein from Caenorhabditis elegans.